The following is a 506-amino-acid chain: NAD(P)H-quinone oxidoreductase subunit 2 (506 aa).

13 consecutive transmembrane segments (helical) span residues 14–34 (AIIP…VDLA), 42–62 (WAPI…ALQW), 79–99 (LAIA…LISW), 108–128 (PIGE…LLCG), 132–152 (LISV…LSGY), 167–187 (LLVG…LYGL), 206–226 (FITS…IAAV), 240–260 (PTPV…AFAI), 276–296 (LLFT…ALAQ), 302–322 (MLAY…VSGT), 330–350 (VLYL…VILF), 374–394 (LGLS…GFFG), and 409–429 (LLVI…ISVI).

The protein belongs to the complex I subunit 2 family. In terms of assembly, NDH-1 can be composed of about 15 different subunits; different subcomplexes with different compositions have been identified which probably have different functions.

The protein localises to the cellular thylakoid membrane. It carries out the reaction a plastoquinone + NADH + (n+1) H(+)(in) = a plastoquinol + NAD(+) + n H(+)(out). It catalyses the reaction a plastoquinone + NADPH + (n+1) H(+)(in) = a plastoquinol + NADP(+) + n H(+)(out). NDH-1 shuttles electrons from an unknown electron donor, via FMN and iron-sulfur (Fe-S) centers, to quinones in the respiratory and/or the photosynthetic chain. The immediate electron acceptor for the enzyme in this species is believed to be plastoquinone. Couples the redox reaction to proton translocation, and thus conserves the redox energy in a proton gradient. Cyanobacterial NDH-1 also plays a role in inorganic carbon-concentration. This Prochlorococcus marinus (strain AS9601) protein is NAD(P)H-quinone oxidoreductase subunit 2.